The following is a 136-amino-acid chain: Putative pre-16S rRNA nuclease (136 aa).

Belongs to the YqgF nuclease family.

It localises to the cytoplasm. In terms of biological role, could be a nuclease involved in processing of the 5'-end of pre-16S rRNA. The protein is Putative pre-16S rRNA nuclease of Francisella tularensis subsp. tularensis (strain WY96-3418).